The primary structure comprises 513 residues: ATP synthase subunit alpha (513 aa).

169–176 serves as a coordination point for ATP; sequence GDRQTGKT.

Belongs to the ATPase alpha/beta chains family. In terms of assembly, F-type ATPases have 2 components, CF(1) - the catalytic core - and CF(0) - the membrane proton channel. CF(1) has five subunits: alpha(3), beta(3), gamma(1), delta(1), epsilon(1). CF(0) has three main subunits: a(1), b(2) and c(9-12). The alpha and beta chains form an alternating ring which encloses part of the gamma chain. CF(1) is attached to CF(0) by a central stalk formed by the gamma and epsilon chains, while a peripheral stalk is formed by the delta and b chains.

The protein resides in the cell inner membrane. The catalysed reaction is ATP + H2O + 4 H(+)(in) = ADP + phosphate + 5 H(+)(out). Produces ATP from ADP in the presence of a proton gradient across the membrane. The alpha chain is a regulatory subunit. This Edwardsiella ictaluri (strain 93-146) protein is ATP synthase subunit alpha.